A 372-amino-acid polypeptide reads, in one-letter code: UDP-N-acetylglucosamine 2-epimerase (372 aa).

Substrate-binding positions include Arg10, Lys15, Asp95, Glu117, His212, Gln270, Phe275, 289-291 (SGG), Glu295, and Arg312.

Belongs to the UDP-N-acetylglucosamine 2-epimerase family.

The catalysed reaction is UDP-N-acetyl-alpha-D-glucosamine = UDP-N-acetyl-alpha-D-mannosamine. It participates in capsule biogenesis; capsule polysaccharide biosynthesis. With respect to regulation, activated by UDP-GlcNAc and inhibited by 2-acetamidoglucal and UDP. Activity is strongly decreased in the presence of Co(2+) and abolished in the presence of Mn(2+) or Zn(2+). Its function is as follows. Catalyzes the interconversion between UDP-N-acetylglucosamine (UDP-GlcNAc) and UDP-N-acetylmannosamine (UDP-ManNAc). Involved in the biosynthesis of the capsular polysaccharides. In vitro, can also use several chemoenzymatically synthesized UDP-ManNAc derivatives as substrates, with lower efficiency. This chain is UDP-N-acetylglucosamine 2-epimerase, found in Neisseria meningitidis serogroup A / serotype 4A (strain DSM 15465 / Z2491).